Consider the following 909-residue polypeptide: MLSNLLKGIFGSRNDRLVKQYSRIVRTINELEAVISPLSDEELRDKTSEFKQRISNGEKLDQLLPEAFAVVREASKRVLGMRHFDVQLIGGMVLHEGKIAEMRTGEGKTLMATLPIYLNALSGKGVHIVTVNDYLAKRDAEWMGQIYQFLGLSVGVVLSQMPHEDKQAAYGADITYGTNNEYGFDYLRDNMVGHSAERVQRVLNFAIVDEVDSILIDEARTPLIISGMAEGDTEVYKRVDVLIPRLTRQKDENSPGDYSVDEKTQQVLLSEEGFIHAEKLLGEVGLLPAESSLYDPANITLIHHLNAGLRAHALYNRDQHYVVQNDEVVIVDEFTGRLMPGRRWSEGLHQAVEAKENVSIQKENQTLASITFQNYFRMYEKLAGMTGTADTEAFEFQQIYGLETVVIPTHRPIAREDRMDQVFRTAREKYQAIIADIKSCYERGQPVLVGTGSIENNELLSTMLTKEKLPHQVLNAKQHEREADIIAQAGQSKMVTIATNMAGRGTDIVLGGNLEQVINRIRVDDALDDMTKTEKIKETRQAWQVRHDEVIKLGGLHIIGTERHESRRIDNQLRGRSGRQGDPGSSRFYLSLEDPLLRIFSSDRVANIMTRLKMPEGEAIEHPWVTRAIENAQRKVEARNFDIRKQLLEYDDVANDQRKVIYQQRNELLDAEQGISETVSAIRESVINQLIGLYIPAQSIEEQWDVPGLEKALASEFLLRIPVQEWLEADSELHEENLRSRIMESVNTSYQGKVEQVGASIMNQYERMVMLHSIDSHWREHLAALDHLRQGIHLRGYAQQNPKQEYKREAFELFAGMLDAIKADVTKILMTVQIRSEQQVESVAETSTPKNLQYHHAAYSEAEEEHQSVTEGHEAKQQPFVRKSDKIGRNDPCPCGSGRKYKQCHGKLD.

ATP-binding positions include Gln87, 105 to 109 (GEGKT), and Asp507. Disordered regions lie at residues 567–586 (RRIDNQLRGRSGRQGDPGSS) and 859–909 (YSEA…GKLD). Residues 865–889 (EHQSVTEGHEAKQQPFVRKSDKIGR) show a composition bias toward basic and acidic residues. Zn(2+) contacts are provided by Cys893, Cys895, Cys904, and His905. The span at 899-909 (RKYKQCHGKLD) shows a compositional bias: basic residues.

Belongs to the SecA family. As to quaternary structure, monomer and homodimer. Part of the essential Sec protein translocation apparatus which comprises SecA, SecYEG and auxiliary proteins SecDF-YajC and YidC. Zn(2+) is required as a cofactor.

Its subcellular location is the cell inner membrane. It localises to the cytoplasm. The catalysed reaction is ATP + H2O + cellular proteinSide 1 = ADP + phosphate + cellular proteinSide 2.. In terms of biological role, part of the Sec protein translocase complex. Interacts with the SecYEG preprotein conducting channel. Has a central role in coupling the hydrolysis of ATP to the transfer of proteins into and across the cell membrane, serving both as a receptor for the preprotein-SecB complex and as an ATP-driven molecular motor driving the stepwise translocation of polypeptide chains across the membrane. In Nitrosomonas eutropha (strain DSM 101675 / C91 / Nm57), this protein is Protein translocase subunit SecA.